Here is a 282-residue protein sequence, read N- to C-terminus: Nucleotide-binding protein PXO_02223 (282 aa).

ATP is bound at residue 5-12; the sequence is GLSGSGKS. Residue 57–60 coordinates GTP; that stretch reads DVRS.

Belongs to the RapZ-like family.

Its function is as follows. Displays ATPase and GTPase activities. The chain is Nucleotide-binding protein PXO_02223 from Xanthomonas oryzae pv. oryzae (strain PXO99A).